The primary structure comprises 95 residues: MNRIFCALMRADAARFREVVFPCALLQNHPHQFPHVLARLEFFAPPDQRNCLLLPRVLVKRSLAAKEPSKVNFLSVNLRKELHEEAKSSKKTNLK.

This is an uncharacterized protein from Archaeoglobus fulgidus (strain ATCC 49558 / DSM 4304 / JCM 9628 / NBRC 100126 / VC-16).